The chain runs to 309 residues: MNWIKKTLRFGEKIKTIIKARATKTEIANSDWTSCCKGPILKKDLEENLWVCPSCNKHHRISPRQRFDIIFGKNNYEVLKTPIPQDDPLNWNDAKPYKDRLKAARKKTGMDCGMMVVNTNILNLKITAIASDFDFVGGSIGAAEGEAFLYGIQHAIENEQPFVVFTSGGGMRMMESLISLSQMTRTTLAINELKKNNLPYIVVLTDPTAGGITASYAMLGDLHLAEPGALIAFAGARVIQGTVREELPEGFQRSEYVEKTGFVDLIVERKDLREKIGSLLSILLKKNSAINSSENETSEDSRALTKAAS.

In terms of domain architecture, CoA carboxyltransferase N-terminal spans 29 to 298 (NSDWTSCCKG…AINSSENETS (270 aa)). Residues Cys35, Cys36, Cys52, and Cys55 each contribute to the Zn(2+) site.

The protein belongs to the AccD/PCCB family. In terms of assembly, acetyl-CoA carboxylase is a heterohexamer composed of biotin carboxyl carrier protein (AccB), biotin carboxylase (AccC) and two subunits each of ACCase subunit alpha (AccA) and ACCase subunit beta (AccD). The cofactor is Zn(2+).

The protein localises to the cytoplasm. It carries out the reaction N(6)-carboxybiotinyl-L-lysyl-[protein] + acetyl-CoA = N(6)-biotinyl-L-lysyl-[protein] + malonyl-CoA. It functions in the pathway lipid metabolism; malonyl-CoA biosynthesis; malonyl-CoA from acetyl-CoA: step 1/1. In terms of biological role, component of the acetyl coenzyme A carboxylase (ACC) complex. Biotin carboxylase (BC) catalyzes the carboxylation of biotin on its carrier protein (BCCP) and then the CO(2) group is transferred by the transcarboxylase to acetyl-CoA to form malonyl-CoA. This Pelagibacter ubique (strain HTCC1062) protein is Acetyl-coenzyme A carboxylase carboxyl transferase subunit beta.